A 243-amino-acid chain; its full sequence is Adapter protein MecA (243 aa).

Residues 119 to 140 form a disordered region; that stretch reads NQVEDGQGIAHNPTKDTNDLDP.

It belongs to the MecA family. As to quaternary structure, homodimer.

Functionally, enables the recognition and targeting of unfolded and aggregated proteins to the ClpC protease or to other proteins involved in proteolysis. The polypeptide is Adapter protein MecA (Lactiplantibacillus plantarum (strain ATCC BAA-793 / NCIMB 8826 / WCFS1) (Lactobacillus plantarum)).